A 275-amino-acid chain; its full sequence is Elongation factor Ts (275 aa).

The tract at residues 76–79 is involved in Mg(2+) ion dislocation from EF-Tu; it reads TDFV.

It belongs to the EF-Ts family.

It localises to the cytoplasm. Its function is as follows. Associates with the EF-Tu.GDP complex and induces the exchange of GDP to GTP. It remains bound to the aminoacyl-tRNA.EF-Tu.GTP complex up to the GTP hydrolysis stage on the ribosome. This chain is Elongation factor Ts, found in Nocardia farcinica (strain IFM 10152).